Here is a 141-residue protein sequence, read N- to C-terminus: Protein X (141 aa).

A compositionally biased stretch (low complexity) spans 24–48 (QSSGPSFPRPAAGSAASSASSPSPS). Positions 24 to 52 (QSSGPSFPRPAAGSAASSASSPSPSDESD) are disordered. The segment at 68–113 (PCCLVFTCAELRTMDSTVNFVSWHANRQLGMPSKDLWTPYIKDQLL) is mitochondrial targeting sequence.

It belongs to the orthohepadnavirus protein X family. In terms of assembly, may form homodimer. May interact with host CEBPA, CFLAR, CREB1, DDB1, E4F1, HBXIP, HSPD1/HSP60, NFKBIA, POLR2E and SMAD4. Interacts with host SMC5-SMC6 complex and induces its degradation. Interacts with host TRPC4AP; leading to prevent ubiquitination of TRPC4AP. Interacts with host PLSCR1; this interaction promotes ubiquitination and degradation of HBx and impairs HBx-mediated cell proliferation. In terms of processing, a fraction may be phosphorylated in insect cells and HepG2 cells, a human hepatoblastoma cell line. Phosphorylated in vitro by host protein kinase C or mitogen-activated protein kinase. N-acetylated in insect cells.

It localises to the host cytoplasm. Its subcellular location is the host nucleus. The protein localises to the host mitochondrion. Its function is as follows. Multifunctional protein that plays a role in silencing host antiviral defenses and promoting viral transcription. Does not seem to be essential for HBV infection. May be directly involved in development of cirrhosis and liver cancer (hepatocellular carcinoma). Most of cytosolic activities involve modulation of cytosolic calcium. The effect on apoptosis is controversial depending on the cell types in which the studies have been conducted. May induce apoptosis by localizing in mitochondria and causing loss of mitochondrial membrane potential. May also modulate apoptosis by binding host CFLAR, a key regulator of the death-inducing signaling complex (DISC). Promotes viral transcription by using the host E3 ubiquitin ligase DDB1 to target the SMC5-SMC6 complex to proteasomal degradation. This host complex would otherwise bind to viral episomal DNA, and prevents its transcription. Moderately stimulates transcription of many different viral and cellular transcription elements. Promoters and enhancers stimulated by HBx contain DNA binding sites for NF-kappa-B, AP-1, AP-2, c-EBP, ATF/CREB, or the calcium-activated factor NF-AT. This Woodchuck hepatitis B virus (isolate 7) (WHV) protein is Protein X.